A 474-amino-acid polypeptide reads, in one-letter code: tRNA-2-methylthio-N(6)-dimethylallyladenosine synthase (474 aa).

Residues 3 to 120 form the MTTase N-terminal domain; sequence KKLHIKTWGC…LPEMIEQVRR (118 aa). [4Fe-4S] cluster contacts are provided by cysteine 12, cysteine 49, cysteine 83, cysteine 157, cysteine 161, and cysteine 164. The region spanning 143–375 is the Radical SAM core domain; the sequence is RAEGPTAFVS…QDRITQQAMR (233 aa). A TRAM domain is found at 378-441; that stretch reads RHMMGTVQRI…TNSLRGVFIR (64 aa).

The protein belongs to the methylthiotransferase family. MiaB subfamily. In terms of assembly, monomer. Requires [4Fe-4S] cluster as cofactor.

It localises to the cytoplasm. The enzyme catalyses N(6)-dimethylallyladenosine(37) in tRNA + (sulfur carrier)-SH + AH2 + 2 S-adenosyl-L-methionine = 2-methylsulfanyl-N(6)-dimethylallyladenosine(37) in tRNA + (sulfur carrier)-H + 5'-deoxyadenosine + L-methionine + A + S-adenosyl-L-homocysteine + 2 H(+). Catalyzes the methylthiolation of N6-(dimethylallyl)adenosine (i(6)A), leading to the formation of 2-methylthio-N6-(dimethylallyl)adenosine (ms(2)i(6)A) at position 37 in tRNAs that read codons beginning with uridine. This chain is tRNA-2-methylthio-N(6)-dimethylallyladenosine synthase, found in Shewanella baltica (strain OS155 / ATCC BAA-1091).